A 394-amino-acid polypeptide reads, in one-letter code: Phosphoglycerate kinase (394 aa).

Substrate-binding positions include 21–23 (DFN), R36, 59–62 (HLGR), R118, and R151. S183 is subject to Phosphoserine. ATP contacts are provided by K201 and G292. The residue at position 299 (T299) is a Phosphothreonine. Residues E323 and 350 to 353 (GGDS) each bind ATP.

This sequence belongs to the phosphoglycerate kinase family. Monomer.

The protein resides in the cytoplasm. The catalysed reaction is (2R)-3-phosphoglycerate + ATP = (2R)-3-phospho-glyceroyl phosphate + ADP. It functions in the pathway carbohydrate degradation; glycolysis; pyruvate from D-glyceraldehyde 3-phosphate: step 2/5. The sequence is that of Phosphoglycerate kinase from Bacillus anthracis (strain A0248).